A 367-amino-acid chain; its full sequence is Ferrochelatase (367 aa).

Fe cation contacts are provided by H226 and E307.

It belongs to the ferrochelatase family.

It localises to the cytoplasm. The enzyme catalyses heme b + 2 H(+) = protoporphyrin IX + Fe(2+). It participates in porphyrin-containing compound metabolism; protoheme biosynthesis; protoheme from protoporphyrin-IX: step 1/1. Its function is as follows. Catalyzes the ferrous insertion into protoporphyrin IX. The polypeptide is Ferrochelatase (Burkholderia mallei (strain NCTC 10247)).